The following is a 147-amino-acid chain: Anti-sigma F factor (147 aa).

This sequence belongs to the anti-sigma-factor family.

It carries out the reaction L-seryl-[protein] + ATP = O-phospho-L-seryl-[protein] + ADP + H(+). The enzyme catalyses L-threonyl-[protein] + ATP = O-phospho-L-threonyl-[protein] + ADP + H(+). Its function is as follows. Binds to sigma F and blocks its ability to form an RNA polymerase holoenzyme (E-sigma F). Phosphorylates SpoIIAA on a serine residue. This phosphorylation may enable SpoIIAA to act as an anti-anti-sigma factor that counteracts SpoIIAB and thus releases sigma F from inhibition. The chain is Anti-sigma F factor from Heyndrickxia coagulans (Weizmannia coagulans).